The following is a 247-amino-acid chain: 23S rRNA (guanosine-2'-O-)-methyltransferase RlmB (247 aa).

Positions 197, 217, and 226 each coordinate S-adenosyl-L-methionine.

It belongs to the class IV-like SAM-binding methyltransferase superfamily. RNA methyltransferase TrmH family. RlmB subfamily.

It localises to the cytoplasm. The enzyme catalyses guanosine(2251) in 23S rRNA + S-adenosyl-L-methionine = 2'-O-methylguanosine(2251) in 23S rRNA + S-adenosyl-L-homocysteine + H(+). Functionally, specifically methylates the ribose of guanosine 2251 in 23S rRNA. This is 23S rRNA (guanosine-2'-O-)-methyltransferase RlmB from Vibrio parahaemolyticus serotype O3:K6 (strain RIMD 2210633).